Consider the following 510-residue polypeptide: Chorion transcription factor Cf2 (510 aa).

Polar residues predominate over residues 1 to 10 (MIKSTTNPQE). The interval 1–40 (MIKSTTNPQEQRLPRPEDQSPAPPPPPPSSATTSTAAPAT) is disordered. Residues 30–40 (SATTSTAAPAT) show a composition bias toward low complexity. 2 consecutive C2H2-type zinc fingers follow at residues 74-97 (HYCPMCHQQFERPQHVADHMQLCH) and 125-148 (HPCFNCDEKFGNAVDLDEHHRLAH). Basic and acidic residues predominate over residues 222-237 (PEEQHHQQQLQAEHHH). The segment at 222 to 279 (PEEQHHQQQLQAEHHHQQQHQQQQQQQQQQQELLEQQQREMQEQAQQQQVHHHQQDQD) is disordered. Over residues 240–257 (QHQQQQQQQQQQQELLEQ) the composition is skewed to low complexity. 5 consecutive C2H2-type zinc fingers follow at residues 366–388 (HKCPDCPKTFKTPGTLAMHRKIH), 401–423 (YTCSYCGKSFTQSNTLKQHTRIH), 429–451 (FRCGYCGRAFTVKDYLNKHLTTH), 457–479 (FHCGYCEKSFSVKDYLTKHIRTH), and 485–508 (YTCPYCDKRFTQRSALTVHTTKLH).

Isoform I is found in embryos, pupae and adult somatic tissue; isoform II occurs in embryos, pupae, ovaries, testis and to a lesser extent in adult somatic tissue.

It is found in the nucleus. Functionally, transcriptional regulator; binds to the promoter region of Cp15. Also binds to its own promoter, thus having a probable autoregulatory role. The chain is Chorion transcription factor Cf2 (Cf2) from Drosophila melanogaster (Fruit fly).